The sequence spans 218 residues: Large ribosomal subunit protein uL3 (218 aa).

The tract at residues 126-163 (HGFSRGPMTHGSKNHRQPGSIGAGTTPGRIYPGKRMSG) is disordered.

Belongs to the universal ribosomal protein uL3 family. As to quaternary structure, part of the 50S ribosomal subunit. Forms a cluster with proteins L14 and L19.

Functionally, one of the primary rRNA binding proteins, it binds directly near the 3'-end of the 23S rRNA, where it nucleates assembly of the 50S subunit. This chain is Large ribosomal subunit protein uL3, found in Synechococcus sp. (strain CC9311).